We begin with the raw amino-acid sequence, 412 residues long: 46 kDa FK506-binding nuclear protein (412 aa).

3 stretches are compositionally biased toward acidic residues: residues 95–113 (EEDLEDEEEAEEEEEEEEA), 169–178 (GEDIDTDEND), and 188–216 (EGDDSDEEDDDEDEEDEEDDDEDDEEEEE). A disordered region spans residues 95 to 304 (EEDLEDEEEA…PVEKKEKKQI (210 aa)). A compositionally biased stretch (basic residues) spans 247–257 (KSQKRRLKKKL). Positions 271–303 (DKPKKEEPQQKAEKKKPEAKKEEAPVEKKEKKQ) are enriched in basic and acidic residues. Positions 324 to 412 (GKVVMVYYEG…VFEVDLKNVK (89 aa)) constitute a PPIase FKBP-type domain.

Belongs to the FKBP-type PPIase family. Phosphorylated by a nuclear kinase in the presence of Mg(2+) and ATP.

The protein resides in the nucleus. The catalysed reaction is [protein]-peptidylproline (omega=180) = [protein]-peptidylproline (omega=0). Inhibited by both FK506 and rapamycin. In terms of biological role, PPIases accelerate the folding of proteins. It catalyzes the cis-trans isomerization of proline imidic peptide bonds in oligopeptides. Binds double-stranded DNA in vitro. The protein is 46 kDa FK506-binding nuclear protein (FKBP46) of Spodoptera frugiperda (Fall armyworm).